A 269-amino-acid polypeptide reads, in one-letter code: G-protein coupled receptor homolog C3 (269 aa).

Residues Cys28 and Cys107 are joined by a disulfide bond. 5 consecutive transmembrane segments (helical) span residues 30 to 50 (IMSV…TLMS), 71 to 91 (IGIL…SPVS), 123 to 143 (LMQI…FVYC), 165 to 185 (IVLM…IVLM), and 200 to 220 (HLCL…ISLA).

The protein belongs to the G-protein coupled receptor 1 family.

The protein resides in the host cell membrane. This chain is G-protein coupled receptor homolog C3, found in Sus scrofa (Pig).